Here is an 86-residue protein sequence, read N- to C-terminus: Large ribosomal subunit protein uL23 (86 aa).

This sequence belongs to the universal ribosomal protein uL23 family. In terms of assembly, part of the 50S ribosomal subunit. Contacts protein L29.

In terms of biological role, binds to 23S rRNA. One of the proteins that surrounds the polypeptide exit tunnel on the outside of the ribosome. This chain is Large ribosomal subunit protein uL23, found in Thermococcus onnurineus (strain NA1).